Here is a 306-residue protein sequence, read N- to C-terminus: Ornithine carbamoyltransferase (306 aa).

Residues 53-56 (STRT), glutamine 80, arginine 104, and 131-134 (HPCQ) contribute to the carbamoyl phosphate site. Residues asparagine 162, aspartate 220, and 224–225 (SM) contribute to the L-ornithine site. Residues 260–261 (CL) and arginine 288 contribute to the carbamoyl phosphate site.

Belongs to the aspartate/ornithine carbamoyltransferase superfamily. OTCase family.

Its subcellular location is the cytoplasm. The catalysed reaction is carbamoyl phosphate + L-ornithine = L-citrulline + phosphate + H(+). It functions in the pathway amino-acid biosynthesis; L-arginine biosynthesis; L-arginine from L-ornithine and carbamoyl phosphate: step 1/3. Reversibly catalyzes the transfer of the carbamoyl group from carbamoyl phosphate (CP) to the N(epsilon) atom of ornithine (ORN) to produce L-citrulline. The protein is Ornithine carbamoyltransferase of Methylobacillus flagellatus (strain ATCC 51484 / DSM 6875 / VKM B-1610 / KT).